A 144-amino-acid polypeptide reads, in one-letter code: Nucleoside diphosphate kinase (144 aa).

Residues Lys-11, Phe-59, Arg-87, Thr-93, Arg-104, and Asn-114 each contribute to the ATP site. His-117 acts as the Pros-phosphohistidine intermediate in catalysis.

It belongs to the NDK family. As to quaternary structure, homotetramer. It depends on Mg(2+) as a cofactor.

It is found in the cytoplasm. It catalyses the reaction a 2'-deoxyribonucleoside 5'-diphosphate + ATP = a 2'-deoxyribonucleoside 5'-triphosphate + ADP. The enzyme catalyses a ribonucleoside 5'-diphosphate + ATP = a ribonucleoside 5'-triphosphate + ADP. In terms of biological role, major role in the synthesis of nucleoside triphosphates other than ATP. The ATP gamma phosphate is transferred to the NDP beta phosphate via a ping-pong mechanism, using a phosphorylated active-site intermediate. The chain is Nucleoside diphosphate kinase from Aliivibrio fischeri (strain MJ11) (Vibrio fischeri).